The following is a 298-amino-acid chain: Apolipoprotein E (298 aa).

The N-terminal stretch at M1–A18 is a signal peptide. Tandem repeats lie at residues L74 to L94, G95 to L116, G117 to L138, G139 to L160, Q161 to A182, E183 to Q203, A204 to M221, and R222 to M243. Residues G95 to M243 are 8 X 22 AA approximate tandem repeats. The residue at position 137 (M137) is a Methionine sulfoxide. At S141 the chain carries Phosphoserine. The tract at residues S151–Q161 is LDL and other lipoprotein receptors binding. Residue K155–K158 participates in heparin binding. Positions Q203–D271 are lipid-binding and lipoprotein association. W217–R224 contributes to the heparin binding site. The specificity for association with VLDL stretch occupies residues A259–D271.

This sequence belongs to the apolipoprotein A1/A4/E family. In terms of assembly, homotetramer. May interact with ABCA1; functionally associated with ABCA1 in the biogenesis of HDLs. May interact with APP/A4 amyloid-beta peptide; the interaction is extremely stable in vitro but its physiological significance is unclear. May interact with MAPT. May interact with MAP2. In the cerebrospinal fluid, interacts with secreted SORL1. Interacts with PMEL; this allows the loading of PMEL luminal fragment on ILVs to induce fibril nucleation. Post-translationally, APOE exists as multiple glycosylated and sialylated glycoforms within cells and in plasma. The extent of glycosylation and sialylation are tissue and context specific. Glycated in plasma VLDL. In terms of processing, phosphorylated by FAM20C in the extracellular medium.

It localises to the secreted. The protein localises to the extracellular space. The protein resides in the extracellular matrix. Its subcellular location is the extracellular vesicle. It is found in the endosome. It localises to the multivesicular body. In terms of biological role, APOE is an apolipoprotein, a protein associating with lipid particles, that mainly functions in lipoprotein-mediated lipid transport between organs via the plasma and interstitial fluids. APOE is a core component of plasma lipoproteins and is involved in their production, conversion and clearance. Apolipoproteins are amphipathic molecules that interact both with lipids of the lipoprotein particle core and the aqueous environment of the plasma. As such, APOE associates with chylomicrons, chylomicron remnants, very low density lipoproteins (VLDL) and intermediate density lipoproteins (IDL) but shows a preferential binding to high-density lipoproteins (HDL). It also binds a wide range of cellular receptors including the LDL receptor/LDLR, the LDL receptor-related proteins LRP1, LRP2 and LRP8 and the very low-density lipoprotein receptor/VLDLR that mediate the cellular uptake of the APOE-containing lipoprotein particles. Finally, APOE also has a heparin-binding activity and binds heparan-sulfate proteoglycans on the surface of cells, a property that supports the capture and the receptor-mediated uptake of APOE-containing lipoproteins by cells. A main function of APOE is to mediate lipoprotein clearance through the uptake of chylomicrons, VLDLs, and HDLs by hepatocytes. APOE is also involved in the biosynthesis by the liver of VLDLs as well as their uptake by peripheral tissues ensuring the delivery of triglycerides and energy storage in muscle, heart and adipose tissues. By participating in the lipoprotein-mediated distribution of lipids among tissues, APOE plays a critical role in plasma and tissues lipid homeostasis. APOE is also involved in two steps of reverse cholesterol transport, the HDLs-mediated transport of cholesterol from peripheral tissues to the liver, and thereby plays an important role in cholesterol homeostasis. First, it is functionally associated with ABCA1 in the biogenesis of HDLs in tissues. Second, it is enriched in circulating HDLs and mediates their uptake by hepatocytes. APOE also plays an important role in lipid transport in the central nervous system, regulating neuron survival and sprouting. The polypeptide is Apolipoprotein E (APOE) (Cavia tschudii (Montane guinea pig)).